We begin with the raw amino-acid sequence, 370 residues long: uncharacterized protein (370 aa).

This is an uncharacterized protein from Acanthamoeba polyphaga (Amoeba).